We begin with the raw amino-acid sequence, 600 residues long: Elongation factor 4 (600 aa).

The 183-residue stretch at 5-187 (KYIRNFSIIA…AIVNKLPPPK (183 aa)) folds into the tr-type G domain. Residues 17–22 (DHGKST) and 134–137 (NKID) contribute to the GTP site.

It belongs to the TRAFAC class translation factor GTPase superfamily. Classic translation factor GTPase family. LepA subfamily.

The protein localises to the cell inner membrane. It catalyses the reaction GTP + H2O = GDP + phosphate + H(+). In terms of biological role, required for accurate and efficient protein synthesis under certain stress conditions. May act as a fidelity factor of the translation reaction, by catalyzing a one-codon backward translocation of tRNAs on improperly translocated ribosomes. Back-translocation proceeds from a post-translocation (POST) complex to a pre-translocation (PRE) complex, thus giving elongation factor G a second chance to translocate the tRNAs correctly. Binds to ribosomes in a GTP-dependent manner. The protein is Elongation factor 4 of Rickettsia felis (strain ATCC VR-1525 / URRWXCal2) (Rickettsia azadi).